Reading from the N-terminus, the 1085-residue chain is Voltage-dependent calcium channel subunit alpha-2/delta-3 (1085 aa).

The N-terminal stretch at 1 to 33 (MAGPGSLCCASRGASALLATALLYAALGDVVRS) is a signal peptide. The Extracellular portion of the chain corresponds to 34–1062 (EQQIPLSVVK…HPEENARECG (1029 aa)). The N-linked (GlcNAc...) asparagine glycan is linked to asparagine 166. Positions 256–438 (DVVILVDVSG…ENVMEYLHVL (183 aa)) constitute a VWFA domain. A divalent metal cation is bound by residues aspartate 262, serine 264, and serine 266. The short motif at 262–266 (DVSGS) is the MIDAS-like motif element. A glycan (N-linked (GlcNAc...) asparagine) is linked at asparagine 309. An intrachain disulfide couples cysteine 412 to cysteine 1049. Residues 452 to 543 (WTEAYIDSTL…RPLYEEGKKR (92 aa)) form the Cache domain. Asparagine 547 and asparagine 626 each carry an N-linked (GlcNAc...) asparagine glycan. Tyrosine 918 is subject to Phosphotyrosine. The helical transmembrane segment at 1063 to 1083 (GASSLQAQVALLLLPLVSSLF) threads the bilayer. At 1084–1085 (SR) the chain is on the cytoplasmic side.

The protein belongs to the calcium channel subunit alpha-2/delta family. In terms of assembly, dimer formed of alpha-2-2 and delta-2 chains; disulfide-linked. Voltage-dependent calcium channels are multisubunit complexes, consisting of alpha-1 (CACNA1), alpha-2 (CACNA2D), beta (CACNB) and delta (CACNA2D) subunits in a 1:1:1:1 ratio. In terms of processing, N-glycosylated. Post-translationally, may be proteolytically processed into subunits alpha-2-3 and delta-3 that are disulfide-linked. It is however unclear whether such cleavage really takes place in vivo and has a functional role. As to expression, in heart, it is expressed in atrium but not in ventricle.

The protein resides in the membrane. Its function is as follows. The alpha-2/delta subunit of voltage-dependent calcium channels regulates calcium current density and activation/inactivation kinetics of the calcium channel. Acts as a regulatory subunit for P/Q-type calcium channel (CACNA1A), N-type (CACNA1B), L-type (CACNA1C OR CACNA1D) but not T-type (CACNA1G). The chain is Voltage-dependent calcium channel subunit alpha-2/delta-3 (Cacna2d3) from Rattus norvegicus (Rat).